The chain runs to 595 residues: MATELLCLHRPISLTHKLFRNPLPKVIQATPLTLKLRCSVSTENVSFSETETETRRSANYEPNSWDYDYLLSSDTDESIEVHKDKAKKLEAEVRREINNEKAEFLTLLELIDNVQRLGLGYRFESDIRRALDRFVSSGGFDGVTKTSLHGTALSFRLLRQHGFEVSQEAFSGFKDQNGNFLENLKEDIKAILSLYEASFLALEGENILDEAKVFAISHLKELSEEKIGKELAEQVSHALELPLHRRTQRLEAVWSIEAYRKKEDANQVLLELAILDYNMIQSVYQRDLRETSRWWRRVGLATKLHFARDRLIESFYWAVGVAFEPQYSDCRNSVAKMFSFVTIIDDIYDVYGTLDELELFTDAVERWDVNAINDLPDYMKLCFLALYNTINEIAYDNLKDKGENILPYLTKAWADLCNAFLQEAKWLYNKSTPTFDDYFGNAWKSSSGPLQLIFAYFAVVQNIKKEEIENLQKYHDIISRPSHIFRLCNDLASASAEIARGETANSVSCYMRTKGISEELATESVMNLIDETWKKMNKEKLGGSLFAKPFVETAINLARQSHCTYHNGDAHTSPDELTRKRVLSVITEPILPFER.

Residues 1-37 constitute a chloroplast transit peptide; sequence MATELLCLHRPISLTHKLFRNPLPKVIQATPLTLKLR. Aspartate 345 contributes to the dimethylallyl diphosphate binding site. 2 residues coordinate Mg(2+): aspartate 345 and aspartate 349. The short motif at 345-349 is the DDXXD motif element; it reads DDIYD. Dimethylallyl diphosphate is bound by residues glutamate 423, arginine 486, and asparagine 489. Positions 489, 493, and 497 each coordinate Mg(2+).

It belongs to the terpene synthase family. Tpsb subfamily. It depends on Mg(2+) as a cofactor. Requires Mn(2+) as cofactor.

It is found in the plastid. The protein resides in the chloroplast. It carries out the reaction dimethylallyl diphosphate = isoprene + diphosphate. Its function is as follows. Lyase that catalyzes the formation of isoprene from dimethylallyl diphosphate. In Populus tremuloides (Quaking aspen), this protein is Isoprene synthase, chloroplastic (ISPS).